The primary structure comprises 446 residues: uncharacterized protein (446 aa).

The segment at 141–282 (TEAETNGTRP…GPKPKVKRVS (142 aa)) is disordered. A compositionally biased stretch (polar residues) spans 159–170 (NSGSKPKAGTQS). Residues 194–210 (IKSERRSISQGGEKDKA) are compositionally biased toward basic and acidic residues. Phosphoserine is present on residues Ser-200, Ser-202, Ser-212, and Ser-214. Composition is skewed to low complexity over residues 211–221 (SSSSPSSSQQS) and 229–239 (SPSQQNSRSSS). The residue at position 251 (Ser-251) is a Phosphoserine. The segment covering 269 to 280 (GKSRGPKPKVKR) has biased composition (basic residues). Residues Ser-282 and Ser-307 each carry the phosphoserine modification.

This is an uncharacterized protein from Drosophila melanogaster (Fruit fly).